Consider the following 648-residue polypeptide: DNA gyrase subunit B (648 aa).

The region spanning 432–546 (RELFIVEGNS…YGFVYLAQPP (115 aa)) is the Toprim domain. Mg(2+) contacts are provided by Glu438, Asp511, and Asp513.

This sequence belongs to the type II topoisomerase GyrB family. Heterotetramer, composed of two GyrA and two GyrB chains. In the heterotetramer, GyrA contains the active site tyrosine that forms a transient covalent intermediate with DNA, while GyrB binds cofactors and catalyzes ATP hydrolysis. Mg(2+) is required as a cofactor. It depends on Mn(2+) as a cofactor. Ca(2+) serves as cofactor.

It localises to the cytoplasm. The catalysed reaction is ATP-dependent breakage, passage and rejoining of double-stranded DNA.. In terms of biological role, a type II topoisomerase that negatively supercoils closed circular double-stranded (ds) DNA in an ATP-dependent manner to modulate DNA topology and maintain chromosomes in an underwound state. Negative supercoiling favors strand separation, and DNA replication, transcription, recombination and repair, all of which involve strand separation. Also able to catalyze the interconversion of other topological isomers of dsDNA rings, including catenanes and knotted rings. Type II topoisomerases break and join 2 DNA strands simultaneously in an ATP-dependent manner. This chain is DNA gyrase subunit B, found in Metamycoplasma hominis (strain ATCC 23114 / DSM 25592 / NBRC 14850 / NCTC 10111 / PG21) (Mycoplasma hominis).